The following is a 67-amino-acid chain: Large ribosomal subunit protein eL24 (67 aa).

Zn(2+)-binding residues include Cys7, Cys10, Cys33, and Cys37. The segment at 7-37 (CSYCGKPFEPGTGKMFVRNDGRVLFFCSRKC) adopts a C4-type zinc-finger fold.

It belongs to the eukaryotic ribosomal protein eL24 family. In terms of assembly, part of the 50S ribosomal subunit. Forms a cluster with proteins L3 and L14. The cofactor is Zn(2+).

In terms of biological role, binds to the 23S rRNA. The sequence is that of Large ribosomal subunit protein eL24 from Pyrococcus abyssi (strain GE5 / Orsay).